A 104-amino-acid chain; its full sequence is Inner membrane protein YjeO (104 aa).

At 1–5 (MSARM) the chain is on the cytoplasmic side. A helical transmembrane segment spans residues 6 to 26 (FVLCCIWFIVAFLWITITSAL). At 27 to 52 (DKEWMIDGRGINNVCDVLMYLEEDDT) the chain is on the periplasmic side. The helical transmembrane segment at 53–73 (RDVGVIMTLPLFFPFLWFALW) threads the bilayer. Residues 74 to 77 (RKKR) lie on the Cytoplasmic side of the membrane. The helical transmembrane segment at 78–98 (GWFMYATALAIFGYWLWQFFL) threads the bilayer. The Periplasmic segment spans residues 99 to 104 (RYQFCL).

Its subcellular location is the cell inner membrane. The chain is Inner membrane protein YjeO (yjeO) from Escherichia coli (strain K12).